Consider the following 729-residue polypeptide: MSIEAVWGTLQDGLNLLYRREHMSKKYYMMLYDAVYNICTTTTLANSNNNSPEFASEFLYKQLENYIRTYVIAIRDRISACSGDELLGKCTIEWDNFKFSTRICNCIFQYLNRNFVSKKVEDKNGEIVEIYKLALDIWKAEFFDNFKVKTIDAILELILLERCGSTINSTHISSVVECLTELDIYKVSFEPQFLDATKLFYKQEVLNSKETVIEYMITVENRLFQEEYRSRRYLGPSTNDLLIDSCESILISDRLKFLHSEFERLLEARKDEHLTRMYSLCRRVTHGLEDLRVYLEKRILKEGHETLQRLAKDSGLKTTPKEYITKLLEVHEIYFNLINKAFDRNALFMQSLDKASKDFIEANAVTMLAPEKHRSTRSADYLARYCDQLLKKNSKVQDETALDKALTVLKYISEKDVFQLYYQNWFSERIINNSSASDDAEEKFITNLTATEGLEYTRNLVKMVEDAKISKDLTTEFKDIKTEKSIDFNVILQTTGAWPSLDQIKIILPRELSTILKEFDTFYNASHNGRRLNWAYSQCRGEVNSKAFEKKYVFIVTASQLCTLYLFNEQDSFTIEQISKAIEMTAKSTSAIVGSLNPVIDPVLVVDKGNEKDGYPPDAVVSLNTKYANKKVRVDLTTAIKKATADRETDAVQNTVESDRKYEIKACIVRIMKTRKSLTHTLLINEIISQLKSRFTPNVQMIKICIEILIEQLYIRRSENEHNVYEYLA.

Residues 659-720 enclose the Cullin neddylation domain; the sequence is DRKYEIKACI…EQLYIRRSEN (62 aa). A Glycyl lysine isopeptide (Lys-Gly) (interchain with G-Cter in NEDD8) cross-link involves residue K673.

Belongs to the cullin family. In terms of assembly, probably interacts with skr-3. In terms of processing, neddylated; which enhances the ubiquitination activity of SCF-like complex.

Functionally, probable core component of cullin-based SCF-like E3 ubiquitin-protein ligase complexes which mediate the ubiquitination and subsequent proteasomal degradation of target proteins. This Caenorhabditis elegans protein is Cullin-6 (cul-6).